Here is a 138-residue protein sequence, read N- to C-terminus: Large ribosomal subunit protein bL17 (138 aa).

The protein belongs to the bacterial ribosomal protein bL17 family. Part of the 50S ribosomal subunit. Contacts protein L32.

This chain is Large ribosomal subunit protein bL17, found in Bradyrhizobium diazoefficiens (strain JCM 10833 / BCRC 13528 / IAM 13628 / NBRC 14792 / USDA 110).